A 488-amino-acid chain; its full sequence is Glutamyl-tRNA(Gln) amidotransferase subunit A (488 aa).

Active-site charge relay system residues include Lys-77 and Ser-152. Ser-176 serves as the catalytic Acyl-ester intermediate.

The protein belongs to the amidase family. GatA subfamily. Heterotrimer of A, B and C subunits.

It carries out the reaction L-glutamyl-tRNA(Gln) + L-glutamine + ATP + H2O = L-glutaminyl-tRNA(Gln) + L-glutamate + ADP + phosphate + H(+). Allows the formation of correctly charged Gln-tRNA(Gln) through the transamidation of misacylated Glu-tRNA(Gln) in organisms which lack glutaminyl-tRNA synthetase. The reaction takes place in the presence of glutamine and ATP through an activated gamma-phospho-Glu-tRNA(Gln). This is Glutamyl-tRNA(Gln) amidotransferase subunit A from Streptococcus pyogenes serotype M49 (strain NZ131).